Consider the following 250-residue polypeptide: Adenosylcobinamide-GDP ribazoletransferase (250 aa).

6 helical membrane passes run 32–52 (KGII…MVAY), 59–79 (LAHS…TGGL), 113–133 (GVLA…GLGE), 136–156 (IYWG…YGCY), 185–205 (LTFI…LLPI), and 230–250 (CELT…AGLF).

Belongs to the CobS family. Mg(2+) serves as cofactor.

It localises to the cell membrane. The enzyme catalyses alpha-ribazole + adenosylcob(III)inamide-GDP = adenosylcob(III)alamin + GMP + H(+). It catalyses the reaction alpha-ribazole 5'-phosphate + adenosylcob(III)inamide-GDP = adenosylcob(III)alamin 5'-phosphate + GMP + H(+). The protein operates within cofactor biosynthesis; adenosylcobalamin biosynthesis; adenosylcobalamin from cob(II)yrinate a,c-diamide: step 7/7. Its function is as follows. Joins adenosylcobinamide-GDP and alpha-ribazole to generate adenosylcobalamin (Ado-cobalamin). Also synthesizes adenosylcobalamin 5'-phosphate from adenosylcobinamide-GDP and alpha-ribazole 5'-phosphate. The sequence is that of Adenosylcobinamide-GDP ribazoletransferase from Alkaliphilus metalliredigens (strain QYMF).